The following is a 314-amino-acid chain: Zinc transporter ZIP3 (314 aa).

Topologically, residues 1-3 (MVK) are extracellular. A helical membrane pass occupies residues 4-24 (LLVAKILCMVGVFFFMLLGSL). Over 25 to 42 (LPVKIIETDFEKAHRSKK) the chain is Cytoplasmic. The helical transmembrane segment at 43–63 (ILSLCNTFGGGVFLATCFNAL) threads the bilayer. Over 64 to 85 (LPAVREKLQKVLSLGHISTDYP) the chain is Extracellular. A helical transmembrane segment spans residues 86–106 (LAETILLLGFFMTVFLEQLIL). Residues 107 to 169 (TFRKEKPSFI…QGLSRASPVR (63 aa)) are Cytoplasmic-facing. Residues serine 125 and serine 129 each carry the phosphoserine modification. Residues 170-190 (LLSLAFALSAHSVFEGLALGL) traverse the membrane as a helical segment. Residues 191–196 (QEEGEK) lie on the Extracellular side of the membrane. A helical transmembrane segment spans residues 197–217 (VVSLFVGVAVHETLVAVALGI). Residues 218–229 (SMARSAMPLRDA) are Cytoplasmic-facing. A helical transmembrane segment spans residues 230-250 (AKLAVTVSAMIPLGIGLGLGI). Residues 251–262 (ESAQGVPGSVAS) lie on the Extracellular side of the membrane. Residues 263 to 283 (VLLQGLAGGTFLFITFLEILA) form a helical membrane-spanning segment. At 284 to 292 (KELEEKSDR) the chain is on the cytoplasmic side. The chain crosses the membrane as a helical span at residues 293-313 (LLKVLFLVLGYTVLAGMVFLK). Tryptophan 314 is a topological domain (extracellular).

The protein belongs to the ZIP transporter (TC 2.A.5) family.

The protein localises to the cell membrane. Its subcellular location is the apical cell membrane. It carries out the reaction Zn(2+)(in) = Zn(2+)(out). Transporter for the divalent cation Zn(2+). Mediates the influx of Zn(2+) into cells from extracellular space. Controls Zn(2+) accumulation into dentate gyrus granule cells in the hippocampus. Mediates Zn(2+) reuptake from the secreted milk within the alveolar lumen. In Homo sapiens (Human), this protein is Zinc transporter ZIP3.